The following is a 342-amino-acid chain: Farnesyl pyrophosphate synthase (342 aa).

Isopentenyl diphosphate is bound by residues K47, R50, and Q86. Residues D93 and D97 each coordinate Mg(2+). R102 contributes to the dimethylallyl diphosphate binding site. Isopentenyl diphosphate is bound at residue R103. Positions 190, 191, 229, 246, and 255 each coordinate dimethylallyl diphosphate.

Belongs to the FPP/GGPP synthase family. As to quaternary structure, homodimer. Requires Mg(2+) as cofactor. Mostly expressed in roots and seeds, and to a lower extent, in leaves and stems.

The protein localises to the cytoplasm. The catalysed reaction is isopentenyl diphosphate + dimethylallyl diphosphate = (2E)-geranyl diphosphate + diphosphate. It carries out the reaction isopentenyl diphosphate + (2E)-geranyl diphosphate = (2E,6E)-farnesyl diphosphate + diphosphate. It functions in the pathway isoprenoid biosynthesis; farnesyl diphosphate biosynthesis; farnesyl diphosphate from geranyl diphosphate and isopentenyl diphosphate: step 1/1. The protein operates within isoprenoid biosynthesis; geranyl diphosphate biosynthesis; geranyl diphosphate from dimethylallyl diphosphate and isopentenyl diphosphate: step 1/1. With respect to regulation, stimulated by methyl jasmonate (MeJA). Catalyzes the sequential condensation of isopentenyl pyrophosphate with the allylic pyrophosphates, dimethylallyl pyrophosphate, and then with the resultant geranylpyrophosphate to the ultimate product farnesyl pyrophosphate. Component of the triterpene saponins (e.g. ginsenosides or panaxosides) and phytosterols biosynthetic pathways. Promotes the accumulation of ginsenosides. In Panax ginseng (Korean ginseng), this protein is Farnesyl pyrophosphate synthase.